Reading from the N-terminus, the 158-residue chain is NAD(P)H-quinone oxidoreductase subunit J, chloroplastic (158 aa).

This sequence belongs to the complex I 30 kDa subunit family. In terms of assembly, NDH is composed of at least 16 different subunits, 5 of which are encoded in the nucleus.

Its subcellular location is the plastid. It is found in the chloroplast thylakoid membrane. It carries out the reaction a plastoquinone + NADH + (n+1) H(+)(in) = a plastoquinol + NAD(+) + n H(+)(out). The enzyme catalyses a plastoquinone + NADPH + (n+1) H(+)(in) = a plastoquinol + NADP(+) + n H(+)(out). Its function is as follows. NDH shuttles electrons from NAD(P)H:plastoquinone, via FMN and iron-sulfur (Fe-S) centers, to quinones in the photosynthetic chain and possibly in a chloroplast respiratory chain. The immediate electron acceptor for the enzyme in this species is believed to be plastoquinone. Couples the redox reaction to proton translocation, and thus conserves the redox energy in a proton gradient. This chain is NAD(P)H-quinone oxidoreductase subunit J, chloroplastic, found in Lotus japonicus (Lotus corniculatus var. japonicus).